The sequence spans 103 residues: Large ribosomal subunit protein eL14 (103 aa).

Belongs to the eukaryotic ribosomal protein eL14 family.

This Pyrobaculum islandicum (strain DSM 4184 / JCM 9189 / GEO3) protein is Large ribosomal subunit protein eL14.